The sequence spans 61 residues: Large ribosomal subunit protein bL32 (61 aa).

Residues 1–16 show a composition bias toward basic residues; sequence MAVPKRKTSPSKRGMR. Positions 1–33 are disordered; sequence MAVPKRKTSPSKRGMRRSADGLKAPTYVEDKNS.

This sequence belongs to the bacterial ribosomal protein bL32 family.

The sequence is that of Large ribosomal subunit protein bL32 from Allorhizobium ampelinum (strain ATCC BAA-846 / DSM 112012 / S4) (Agrobacterium vitis (strain S4)).